A 249-amino-acid chain; its full sequence is V-type proton ATPase subunit D 2 (249 aa).

It belongs to the V-ATPase D subunit family. As to quaternary structure, V-ATPase is a heteromultimeric enzyme made up of two complexes: the ATP-hydrolytic V1 complex and the proton translocation V0 complex. The V1 complex consists of three catalytic AB heterodimers that form a heterohexamer, three peripheral stalks each consisting of EG heterodimers, one central rotor including subunits D and F, and the regulatory subunits C and H. The proton translocation complex V0 consists of the proton transport subunit a, a ring of proteolipid subunits c9c'', rotary subunit d, subunits e and f, and the accessory subunits VhaAC45 and ATP6AP2.

Functionally, subunit of the V1 complex of vacuolar(H+)-ATPase (V-ATPase), a multisubunit enzyme composed of a peripheral complex (V1) that hydrolyzes ATP and a membrane integral complex (V0) that translocates protons. V-ATPase is responsible for acidifying and maintaining the pH of intracellular compartments and in some cell types, is targeted to the plasma membrane, where it is responsible for acidifying the extracellular environment. The sequence is that of V-type proton ATPase subunit D 2 (Vha36-3) from Drosophila melanogaster (Fruit fly).